A 151-amino-acid chain; its full sequence is Large ribosomal subunit protein uL13 (151 aa).

Belongs to the universal ribosomal protein uL13 family. In terms of assembly, part of the 50S ribosomal subunit.

In terms of biological role, this protein is one of the early assembly proteins of the 50S ribosomal subunit, although it is not seen to bind rRNA by itself. It is important during the early stages of 50S assembly. This is Large ribosomal subunit protein uL13 from Microchaete diplosiphon (Fremyella diplosiphon).